The chain runs to 431 residues: UDP-N-acetylmuramate--L-alanine ligase (431 aa).

Residue 108-114 (GAHGKST) coordinates ATP.

The protein belongs to the MurCDEF family.

The protein resides in the cytoplasm. It catalyses the reaction UDP-N-acetyl-alpha-D-muramate + L-alanine + ATP = UDP-N-acetyl-alpha-D-muramoyl-L-alanine + ADP + phosphate + H(+). Its pathway is cell wall biogenesis; peptidoglycan biosynthesis. In terms of biological role, cell wall formation. This is UDP-N-acetylmuramate--L-alanine ligase from Campylobacter jejuni (strain RM1221).